The primary structure comprises 473 residues: Histone-lysine N-methyltransferase SET5 (473 aa).

One can recognise an SET domain in the interval 107-381 (ANVHIIMTSK…SGEELTTTYV (275 aa)).

The protein belongs to the class V-like SAM-binding methyltransferase superfamily. Histone-lysine methyltransferase family. SET5 subfamily.

It localises to the nucleus. The protein localises to the chromosome. Its subcellular location is the cytoplasm. The catalysed reaction is L-lysyl-[histone] + S-adenosyl-L-methionine = N(6)-methyl-L-lysyl-[histone] + S-adenosyl-L-homocysteine + H(+). Its function is as follows. Histone methyltransferase that monomethylates 'Lys-5', 'Lys-8' and 'Lys-12' of histone H4 (H4K5me1, H4K8me1 and H4K12me1, respectively), thereby controlling gene expression and remodeling chromatin structures. This Candida albicans (strain SC5314 / ATCC MYA-2876) (Yeast) protein is Histone-lysine N-methyltransferase SET5 (SET5).